The sequence spans 634 residues: MFFYEKFDIIVIGAGHAGTEAASASSRMGQKTLLITQKRSTIGTLSCNPAIGGLGKSQLVKEIDALGGLMAKVIDYSGIQFRILNSKKGYAVRSTRAQADRFLYQKNMNYFLNNQKNLTIFEQEVSDIIIKNYQVQGIITSDGKIFKSSIVILTAGTFLNGKMYIGSDVFDGGRRNDVSASILANNLKKYFSKIGRLKTGTPPRLKKKSINFDILKKQYGDYPTPVFSFLGKIEQHPKQVPCYITYTNDHTHSIIKKNLHLSPLYSGSITGIGPRYCPSIEDKIIKFPDKISHQIFLEPEGINSEIIYPNGISTSLPKDIQVDLIQSISGLENAHIVHSGYAVEYDYFDPRDLKMTLESKKIKNLFMAGQINGTTGYEEAAAQGLIAGLNAALKIQCKDTWYPKRNEAYIGVLIDDLCSKGTSEPYRMFTSRAEYRLLLRENNADERLTTIGYKLGLIDDFRWKIFSKKQDSISRERNRLKNIILQPKTVFFSSNNKKTIYLKKKCTAFDLLRRPEISYNDLILFLNSFLKKKIVIKNKEITEEIETQSKYFGYIQRQEKEIKKYKYYENKKLYCIKDYREILGLSNEAIIKLNKYRPSSIGQALRISGITPVTISILLIFLKKRKKKKFYFKK.

13-18 (GAGHAG) contributes to the FAD binding site. 273–287 (GPRYCPSIEDKIIKF) contacts NAD(+).

Belongs to the MnmG family. As to quaternary structure, homodimer. Heterotetramer of two MnmE and two MnmG subunits. FAD serves as cofactor.

It localises to the cytoplasm. Its function is as follows. NAD-binding protein involved in the addition of a carboxymethylaminomethyl (cmnm) group at the wobble position (U34) of certain tRNAs, forming tRNA-cmnm(5)s(2)U34. This is tRNA uridine 5-carboxymethylaminomethyl modification enzyme MnmG from Buchnera aphidicola subsp. Cinara cedri (strain Cc).